The sequence spans 338 residues: MLTERQLLILQTIIDDFIGSAQPVGSRTLAKKDEITYSSATIRNEMADLEELGFIEKTHSSSGRVPSEKGYRFYVDHLLAPQNLPNDEIVQIKDLFVERIFEAEKIAQQSAQILSELTNYTAIVLGPKLSTNKLKNVQIVPLDRQTAVAIIVTDTGHVQSKTITVPESVDLSDLEKMVNILNEKLSGVPMSELHNKIFKEIVTVLRGYVHNYDSAIKMLDGTFQVPLSEKIYFGGKANMLSQPEFHDIHKVRSLLTMIDNEAEFYDILRHKQVGIQVKIGRENSATAMEDCSLISATYSIGEEQLGTIAILGPTRMQYSRVISLLQLFTRQFTDGLKK.

This sequence belongs to the HrcA family.

Its function is as follows. Negative regulator of class I heat shock genes (grpE-dnaK-dnaJ and groELS operons). Prevents heat-shock induction of these operons. This is Heat-inducible transcription repressor HrcA from Bacillus anthracis (strain A0248).